We begin with the raw amino-acid sequence, 198 residues long: Uracil phosphoribosyltransferase homolog (198 aa).

The protein belongs to the UPRTase family.

It is found in the plastid. The protein localises to the chloroplast. The sequence is that of Uracil phosphoribosyltransferase homolog from Pyropia yezoensis (Susabi-nori).